An 89-amino-acid chain; its full sequence is Small ribosomal subunit protein uS15 (89 aa).

A compositionally biased stretch (basic and acidic residues) spans 1 to 21; it reads MSITAERKAEVIKDNARDKGD. The interval 1-26 is disordered; that stretch reads MSITAERKAEVIKDNARDKGDTGSPE.

Belongs to the universal ribosomal protein uS15 family. In terms of assembly, part of the 30S ribosomal subunit. Forms a bridge to the 50S subunit in the 70S ribosome, contacting the 23S rRNA.

One of the primary rRNA binding proteins, it binds directly to 16S rRNA where it helps nucleate assembly of the platform of the 30S subunit by binding and bridging several RNA helices of the 16S rRNA. In terms of biological role, forms an intersubunit bridge (bridge B4) with the 23S rRNA of the 50S subunit in the ribosome. The polypeptide is Small ribosomal subunit protein uS15 (Sphingopyxis alaskensis (strain DSM 13593 / LMG 18877 / RB2256) (Sphingomonas alaskensis)).